A 155-amino-acid polypeptide reads, in one-letter code: Mitochondrial import protein 1 (155 aa).

Belongs to the MIM1 family.

The protein localises to the mitochondrion outer membrane. In terms of biological role, required for the assembly of the TOM (translocase of outer membrane) receptor complex, which is responsible for the recognition and translocation of cytosolically synthesized mitochondrial preproteins. The sequence is that of Mitochondrial import protein 1 from Eremothecium gossypii (strain ATCC 10895 / CBS 109.51 / FGSC 9923 / NRRL Y-1056) (Yeast).